Reading from the N-terminus, the 626-residue chain is Methanol dehydrogenase [cytochrome c] subunit 1 (626 aa).

An N-terminal signal peptide occupies residues 1-27 (MSRFVTSVSALAMLALAPAALSSGAYA). A disulfide bridge connects residues cysteine 130 and cysteine 131. Ca(2+) is bound by residues glutamate 204 and asparagine 288. The Proton acceptor role is filled by aspartate 330. Cysteine 413 and cysteine 442 form a disulfide bridge.

This sequence belongs to the bacterial PQQ dehydrogenase family. As to quaternary structure, heterotetramer composed of 2 alpha and 2 beta subunits. The cofactor is pyrroloquinoline quinone. Ca(2+) is required as a cofactor.

Its subcellular location is the cell inner membrane. The enzyme catalyses 2 Fe(III)-[cytochrome cL] + a primary alcohol = 2 Fe(II)-[cytochrome cL] + an aldehyde + 2 H(+). Functionally, catalyzes the oxidation of primary alcohols including methanol. The protein is Methanol dehydrogenase [cytochrome c] subunit 1 (moxF) of Methylorubrum extorquens (strain ATCC 14718 / DSM 1338 / JCM 2805 / NCIMB 9133 / AM1) (Methylobacterium extorquens).